The following is a 373-amino-acid chain: XK-related protein 9 (373 aa).

Transmembrane regions (helical) follow at residues 8 to 28 (FMMS…DIWV), 38 to 58 (YVFS…AQCF), 166 to 186 (AAIM…QVAL), 203 to 223 (ITYL…VVLL), 224 to 244 (LFLN…LGII), 256 to 276 (CISM…FTFF), 295 to 315 (VLGT…IFNP), and 318 to 338 (FIPI…FLIV).

The protein belongs to the XK family. In terms of processing, undergoes proteolytic processing by caspase-3 (CASP3), caspase-6 (CASP6) and caspase-7 (CASP7) to generate the XK-related protein 9, processed form, leading to its activation.

The protein localises to the cell membrane. The catalysed reaction is a 1,2-diacyl-sn-glycero-3-phospho-L-serine(in) = a 1,2-diacyl-sn-glycero-3-phospho-L-serine(out). With respect to regulation, activated upon caspase cleavage to generate the XK-related protein 9, processed form. Does not act prior the onset of apoptosis. Its function is as follows. Phospholipid scramblase that promotes phosphatidylserine exposure on apoptotic cell surface. Phosphatidylserine is a specific marker only present at the surface of apoptotic cells and acts as a specific signal for engulfment. The sequence is that of XK-related protein 9 from Pan troglodytes (Chimpanzee).